The chain runs to 426 residues: Probable alpha-galactosidase B (426 aa).

Positions 1-13 are cleaved as a signal peptide; the sequence is MSRSKTRQGKLPA. 2 disulfide bridges follow: Cys-24–Cys-56 and Cys-106–Cys-136. The active-site Nucleophile is the Asp-134. N-linked (GlcNAc...) asparagine glycans are attached at residues Asn-141 and Asn-159. 204 to 208 contributes to the substrate binding site; that stretch reads EWGQA. Asn-215 is a glycosylation site (N-linked (GlcNAc...) asparagine). Asp-226 serves as the catalytic Proton donor. N-linked (GlcNAc...) asparagine glycosylation is present at Asn-265.

This sequence belongs to the glycosyl hydrolase 27 family.

The protein localises to the secreted. The enzyme catalyses Hydrolysis of terminal, non-reducing alpha-D-galactose residues in alpha-D-galactosides, including galactose oligosaccharides, galactomannans and galactolipids.. Its function is as follows. Hydrolyzes a variety of simple alpha-D-galactoside as well as more complex molecules such as oligosaccharides and polysaccharides. This is Probable alpha-galactosidase B (aglB) from Aspergillus fumigatus (strain CBS 144.89 / FGSC A1163 / CEA10) (Neosartorya fumigata).